A 133-amino-acid polypeptide reads, in one-letter code: Small ribosomal subunit protein uS8c (133 aa).

2 disordered regions span residues 1–23 and 44–133; these read MGND…GAET and FSGN…HVWR. 2 stretches are compositionally biased toward polar residues: residues 12-23 and 55-66; these read APRNASSRGAET and TNRFPVSTSKYQ. Over residues 67–81 the composition is skewed to basic residues; that stretch reads GRTRKARITTRRRVS. The segment covering 114–133 has biased composition (basic and acidic residues); it reads TDREARQKRIGGEAPRHVWR.

This sequence belongs to the universal ribosomal protein uS8 family. Part of the 30S ribosomal subunit.

It localises to the plastid. Its subcellular location is the chloroplast. One of the primary rRNA binding proteins, it binds directly to 16S rRNA central domain where it helps coordinate assembly of the platform of the 30S subunit. This chain is Small ribosomal subunit protein uS8c (rps8), found in Selaginella uncinata (Blue spike-moss).